The following is a 225-amino-acid chain: Glutathione S-transferase Mu 3 (225 aa).

The GST N-terminal domain occupies Ser-5–Gly-92. Glutathione-binding positions include Tyr-11 to Trp-12, Trp-50 to Lys-54, and Asn-63 to Leu-64. Residue Lys-54 forms a Glycyl lysine isopeptide (Lys-Gly) (interchain with G-Cter in SUMO2) linkage. A Glycyl lysine isopeptide (Lys-Gly) (interchain with G-Cter in SUMO2) cross-link involves residue Lys-73. A glutathione-binding site is contributed by Gln-76–Ser-77. The GST C-terminal domain occupies Thr-94 to Ile-212. Tyr-120 provides a ligand contact to substrate.

This sequence belongs to the GST superfamily. Mu family. In terms of assembly, homodimer.

The protein resides in the cytoplasm. The enzyme catalyses RX + glutathione = an S-substituted glutathione + a halide anion + H(+). Its function is as follows. Conjugation of reduced glutathione to a wide number of exogenous and endogenous hydrophobic electrophiles. May govern uptake and detoxification of both endogenous compounds and xenobiotics at the testis and brain blood barriers. The chain is Glutathione S-transferase Mu 3 (GSTM3) from Macaca fuscata fuscata (Japanese macaque).